The sequence spans 135 residues: Crustacean hyperglycemic hormones A* (135 aa).

Residues 1–26 (MVSFRTMWSVVVVVVVASLASSGVQG) form the signal peptide. Residue glutamine 62 is modified to Pyrrolidone carboxylic acid. Cystine bridges form between cysteine 68–cysteine 104, cysteine 84–cysteine 100, and cysteine 87–cysteine 113. A Valine amide modification is found at valine 133.

It belongs to the arthropod CHH/MIH/GIH/VIH hormone family. As to expression, produced by the medulla terminalis X-organ in the eyestalks and transported to the sinus gland where they are stored and released.

It localises to the secreted. Its function is as follows. Hormone found in the sinus gland of isopods and decapods which controls the blood sugar level. Has a secretagogue action over the amylase released from the midgut gland. May act as a stress hormone and may be involved in the control of molting and reproduction. This is Crustacean hyperglycemic hormones A* (CHHA*) from Faxonius limosus (Spinycheek crayfish).